Reading from the N-terminus, the 486-residue chain is uncharacterized protein (486 aa).

A helical membrane pass occupies residues 7 to 28 (HVISIFETVGAYFINIFYNFLY). N73, N83, and N195 each carry an N-linked (GlcNAc...) asparagine; by host glycan. A coiled-coil region spans residues 183–233 (ELEETYARLSSYNRSLLYQIEELTSEKKSFLEELSTLRKKYEKRQSEYRRL). The disordered stretch occupies residues 299–329 (SQEVTSKSPNNYPVPQSRTIVNKPSDNYPVP). Polar residues predominate over residues 300-323 (QEVTSKSPNNYPVPQSRTIVNKPS). N-linked (GlcNAc...) asparagine; by host glycosylation occurs at N461.

This sequence belongs to the asfivirus B475L family.

It is found in the host membrane. This is an uncharacterized protein from Ornithodoros (relapsing fever ticks).